A 274-amino-acid chain; its full sequence is NAD(P)H dehydrogenase [quinone] 1 (274 aa).

Residues His-12, 18 to 19 (FN), and Gln-67 each bind FAD. Ser-82 is subject to Phosphoserine. 104–107 (LQWF) contributes to the FAD binding site. A substrate-binding site is contributed by 126 to 128 (AYT). FAD contacts are provided by residues 148-151 (TTGG), Tyr-156, and Arg-201. The important for apoenzyme conformational stability stretch occupies residues 225 to 274 (PSSLFDLNFQAGFLMKKEVQDEEKNKKFGLSVGHHLGKSIPTDNQIKARK). Residues Lys-250 and Lys-251 each participate in a glycyl lysine isopeptide (Lys-Gly) (interchain with G-Cter in SUMO2) cross-link.

This sequence belongs to the NAD(P)H dehydrogenase (quinone) family. Homodimer. Interacts with PDLIM4 isoform 2; this interaction stabilizes PDLIM4 isoform 2 in response to oxidative stress and protects it from ubiquitin-independent degradation by the core 20S proteasome. Interacts with TP73 (via SAM domain); this interaction is NADH-dependent, stabilizes TP73 in response to oxidative stress and protects it from ubiquitin-independent degradation by the 20S proteasome. Interacts with TP53; this interaction is NADH-dependent, stabilizes TP53 in response to oxidative stress and protects it from ubiquitin-independent degradation by the 20S proteasome. FAD serves as cofactor.

It localises to the cytoplasm. It is found in the cytosol. The enzyme catalyses a quinone + NADH + H(+) = a quinol + NAD(+). It catalyses the reaction a quinone + NADPH + H(+) = a quinol + NADP(+). It carries out the reaction ubiquinone-10 + NADH + H(+) = ubiquinol-10 + NAD(+). The catalysed reaction is menadione + NADH + H(+) = menadiol + NAD(+). Inhibited by dicoumarol. Functionally, flavin-containing quinone reductase that catalyzes two-electron reduction of quinones to hydroquinones using either NADH or NADPH as electron donors. In a ping-pong kinetic mechanism, the electrons are sequentially transferred from NAD(P)H to flavin cofactor and then from reduced flavin to the quinone, bypassing the formation of semiquinone and reactive oxygen species. Regulates cellular redox state primarily through quinone detoxification. Reduces components of plasma membrane redox system such as coenzyme Q and vitamin quinones, producing antioxidant hydroquinone forms. In the process may function as superoxide scavenger to prevent hydroquinone oxidation and facilitate excretion. Alternatively, can activate quinones and their derivatives by generating redox reactive hydroquinones with DNA cross-linking antitumor potential. Acts as a gatekeeper of the core 20S proteasome known to degrade proteins with unstructured regions. Upon oxidative stress, interacts with tumor suppressors TP53 and TP73 in a NADH-dependent way and inhibits their ubiquitin-independent degradation by the 20S proteasome. The chain is NAD(P)H dehydrogenase [quinone] 1 from Homo sapiens (Human).